Reading from the N-terminus, the 265-residue chain is uncharacterized protein (265 aa).

A signal peptide spans 1-20; that stretch reads MSRAMALFFVLCWIQDEIVL. A helical membrane pass occupies residues 192-212; sequence IIAAVSGVAILMAIVLLLLGL.

The protein resides in the membrane. This is an uncharacterized protein from Homo sapiens (Human).